Consider the following 253-residue polypeptide: Kallikrein-7 (253 aa).

The N-terminal stretch at 1 to 22 (MARSLLLPLQILLLSLALETAG) is a signal peptide. Positions 23–29 (EEAQGDK) are cleaved as a propeptide — activation peptide. A Peptidase S1 domain is found at 30-250 (IIDGAPCARG…FTKWINDTMK (221 aa)). Cystine bridges form between Cys36/Cys165, Cys55/Cys71, Cys137/Cys239, Cys144/Cys211, Cys176/Cys190, and Cys201/Cys226. Residues His70 and Asp112 each act as charge relay system in the active site. Ser205 functions as the Charge relay system in the catalytic mechanism. A glycan (N-linked (GlcNAc...) asparagine) is linked at Asn246.

This sequence belongs to the peptidase S1 family. Kallikrein subfamily. As to expression, abundantly expressed in the skin and is expressed by keratinocytes in the epidermis. Also expressed in the brain, mammary gland, cerebellum, spinal cord and kidney. Lower levels in salivary glands, uterus, thymus, thyroid, placenta, trachea and testis. Up-regulated in ovarian carcinoma, especially late-stage serous carcinoma, compared with normal ovaries and benign adenomas (at protein level).

Its subcellular location is the secreted. The catalysed reaction is Cleavage of proteins with aromatic side chains in the P1 position.. Its activity is regulated as follows. Inhibited by Zn2+ and Cu2+ at low micromolar concentrations. Inhibited by SERPINA12. Its function is as follows. May catalyze the degradation of intercellular cohesive structures in the cornified layer of the skin in the continuous shedding of cells from the skin surface. Specific for amino acid residues with aromatic side chains in the P1 position. Cleaves insulin A chain at '14-Tyr-|-Gln-15' and insulin B chain at '6-Leu-|-Cys-7', '16-Tyr-|-Leu-17', '25-Phe-|-Tyr-26' and '26-Tyr-|-Thr-27'. Could play a role in the activation of precursors to inflammatory cytokines. This is Kallikrein-7 (KLK7) from Homo sapiens (Human).